Here is a 148-residue protein sequence, read N- to C-terminus: Putative pre-16S rRNA nuclease (148 aa).

The protein belongs to the YqgF nuclease family.

Its subcellular location is the cytoplasm. Could be a nuclease involved in processing of the 5'-end of pre-16S rRNA. This Chlamydia trachomatis serovar L2 (strain ATCC VR-902B / DSM 19102 / 434/Bu) protein is Putative pre-16S rRNA nuclease.